The primary structure comprises 240 residues: Uridylate kinase (240 aa).

13-16 (KASG) provides a ligand contact to ATP. An involved in allosteric activation by GTP region spans residues 21-26 (GSQGFG). UMP is bound at residue Gly-55. ATP is bound by residues Gly-56 and Arg-60. UMP is bound by residues Asp-75 and 136–143 (TGNPFFTT). ATP contacts are provided by Thr-163, Gln-164, Tyr-169, and Asp-172.

It belongs to the UMP kinase family. As to quaternary structure, homohexamer.

It is found in the cytoplasm. The enzyme catalyses UMP + ATP = UDP + ADP. It functions in the pathway pyrimidine metabolism; CTP biosynthesis via de novo pathway; UDP from UMP (UMPK route): step 1/1. Its activity is regulated as follows. Allosterically activated by GTP. Inhibited by UTP. Its function is as follows. Catalyzes the reversible phosphorylation of UMP to UDP. The chain is Uridylate kinase from Brucella anthropi (strain ATCC 49188 / DSM 6882 / CCUG 24695 / JCM 21032 / LMG 3331 / NBRC 15819 / NCTC 12168 / Alc 37) (Ochrobactrum anthropi).